A 61-amino-acid chain; its full sequence is MAKKALIAKAARKPKFGVRGYTRCQRCGRPHSVYRKFGLCRVCLREMAHRGELPGVTKSSW.

The Zn(2+) site is built by Cys-24, Cys-27, Cys-40, and Cys-43.

It belongs to the universal ribosomal protein uS14 family. Zinc-binding uS14 subfamily. As to quaternary structure, part of the 30S ribosomal subunit. Contacts proteins S3 and S10. It depends on Zn(2+) as a cofactor.

Binds 16S rRNA, required for the assembly of 30S particles and may also be responsible for determining the conformation of the 16S rRNA at the A site. In Streptomyces avermitilis (strain ATCC 31267 / DSM 46492 / JCM 5070 / NBRC 14893 / NCIMB 12804 / NRRL 8165 / MA-4680), this protein is Small ribosomal subunit protein uS14B.